The primary structure comprises 1166 residues: MGAVFLSGRSGSGKTTFILNEIREKLRDEPLGKPIIFLVPDQMTFLMEYELSKTPDLGGTIRAQVYSFSRLAWRVLQHTGGMNRPFLTGTGIQMLLRRLIEEHKGEFKVYQNASDKSGFTEQVERMLTEFKRHCLPPQSIRDMMEGTGKSEYEDERILSDKLHDLYILYSKLEENLENQYVQSEDYLTLLAEQIPYAEEIRNAAVYVDGFHQFTPQEMSVLEQLMVHAEEITFSLTADKPFTANSPNDLHLFRMTGKAYYDLYQKAKELGLDPSEVRLEETKRHRHHPELQHLERYFDERPAKPYPGQTESLRIMQASNRRTEIEGIAREIHSLIRQGRFRLRDIAVIARNVEDYKDTIKEVFKDCELPFFIDGKESMQNHPLIELIRSTLDIIKGNWRYEAVFRCVKTELLFPEGQPKERLREQIDQLENYCIAYGIKGDRWTSKDPFVYRRYASLDEDFAKTDKEIETENMLNELKGWIVPPIHRLQKRLKKAETVREMAEAVYLYLEEADVPMKLEQERRLAEEGGRIAESRQHEQVWDAVIQLLDEFVEMMGTERISFALFQQMIETGLESLKFALIPPALDQVFIGNMDLSRMYGTKCTFLIGVNDGILPARPADDGVLSDEDREWLKRNGAQLAATGREQLLDENFLIYMTLSSPSEKLYVSYPIADSEGKTLLPSTVVKRLNELFPDSEEKMLIHEPEQLDDEAQLEFLVNKGIALSHLAGQLGIWTRQYAISDVWWSTYNFLMNEPDRIFSQNILSSLFFRNKVENLNRHVSRDLYGEHIQGSVSRMETFKACPFSHFASHGLKLKERQFFKLEAPDIGQLFHSALKLISDRLHELKLDWRDLTKAQCETLSSDAVERLAPKLQKEILLSSNRHHYVKQKLQKIIARVSGILSEHAKASGFAPVGIELGFGGKGPLPPMRFTLKNGCTMELVGRIDRVDKAESSKGLLLRIVDYKSSDKGLDLAEVYYGLALQMLTYLDLSITHSTDWLGMKASPAGVLYFHVHDPMIQASVPLGLDEIEKEIFKKFKMKGLLLGDQEAVKLMDTTLEQGRSNIISAGLKKDGSLRSDSDVVAEEDFHVLRRHIRRTFQQAGEEITDGKVSIEPYKLKDRTPCTYCSYRSFCQFDESLEENEYRILKPEKDSVILERLKKEDEADGDF.

The UvrD-like helicase ATP-binding domain occupies 1–285 (MGAVFLSGRS…VRLEETKRHR (285 aa)). 8-15 (GRSGSGKT) is an ATP binding site. Residues 279–586 (EETKRHRHHP…KFALIPPALD (308 aa)) enclose the UvrD-like helicase C-terminal domain. 4 residues coordinate [4Fe-4S] cluster: Cys-801, Cys-1121, Cys-1124, and Cys-1130.

It belongs to the helicase family. AddB/RexB type 1 subfamily. As to quaternary structure, heterodimer of AddA and AddB. The cofactor is Mg(2+). [4Fe-4S] cluster is required as a cofactor.

Its function is as follows. The heterodimer acts as both an ATP-dependent DNA helicase and an ATP-dependent, dual-direction single-stranded exonuclease. Recognizes the chi site generating a DNA molecule suitable for the initiation of homologous recombination. The AddB subunit has 5' -&gt; 3' nuclease activity but not helicase activity. This chain is ATP-dependent helicase/deoxyribonuclease subunit B, found in Bacillus licheniformis (strain ATCC 14580 / DSM 13 / JCM 2505 / CCUG 7422 / NBRC 12200 / NCIMB 9375 / NCTC 10341 / NRRL NRS-1264 / Gibson 46).